The chain runs to 77 residues: MKNSSILLLLVVFFVISSSGEAKTCSDGWTCLGPKEEDKCKENCMAKHKGVGTCNLYTIPEFPAPITYYMCDCMFDC.

The N-terminal stretch at 1 to 22 (MKNSSILLLLVVFFVISSSGEA) is a signal peptide. Intrachain disulfides connect Cys25–Cys77, Cys31–Cys54, Cys40–Cys71, and Cys44–Cys73.

It belongs to the DEFL family.

Its subcellular location is the secreted. The sequence is that of Putative defensin-like protein 185 (LCR39) from Arabidopsis thaliana (Mouse-ear cress).